A 73-amino-acid chain; its full sequence is Arabinogalactan protein 16 (73 aa).

A signal peptide spans 1-26 (MASRNSVTGFALFSFVFAVILSLAGA). Residue Gln27 is modified to Pyrrolidone carboxylic acid. Residues Pro31, Pro33, and Pro35 each carry the 4-hydroxyproline modification. Residues Pro31, Pro33, and Pro35 are each glycosylated (O-linked (Ara...) hydroxyproline). Ser37 carries the GPI-anchor amidated serine lipid modification. Positions 38–73 (DGTSIDQGIAYLLMVVALVLTYLIHPLDASSSYSFF) are cleaved as a propeptide — removed in mature form.

It belongs to the AG-peptide AGP family. Contains 4-hydroxyproline; hydroxylated on Pro-31, Pro-33 and Pro-35. In terms of processing, O-glycosylated on hydroxyprolines; noncontiguous hydroxylproline residues are glycosylated with arabinogalactan. Predominantly expressed in flowers.

The protein localises to the cell membrane. In terms of biological role, proteoglycan that seems to be implicated in diverse developmental roles such as differentiation, cell-cell recognition, embryogenesis and programmed cell death. In Arabidopsis thaliana (Mouse-ear cress), this protein is Arabinogalactan protein 16.